We begin with the raw amino-acid sequence, 489 residues long: Cytochrome P450 302a1, mitochondrial (489 aa).

Position 434 (C434) interacts with heme.

This sequence belongs to the cytochrome P450 family. The cofactor is heme. Complex coexpression pattern of dib (disembodied) and sad (shade) in the early embryo that restricts to the prothoracic gland cells of the developing ring gland during late embryogenesis. In larvae and adult, coexpression is seen in prothoracic gland and follicle cells of the ovary. In adults, coexpression is seen in the follicle cells.

It is found in the mitochondrion membrane. The enzyme catalyses 2,22-dideoxyecdysone + 2 reduced [adrenodoxin] + O2 + 2 H(+) = 2-deoxyecdysone + 2 oxidized [adrenodoxin] + H2O. It functions in the pathway steroid biosynthesis; ecdysteroid biosynthesis. In terms of biological role, required for CNS development; negatively regulates glial cell division in the embryonic midline. Involved in the metabolism of insect hormones; responsible for ecdysteroid C22-hydroxylase activity. May be involved in the breakdown of synthetic insecticides. The sequence is that of Cytochrome P450 302a1, mitochondrial from Drosophila melanogaster (Fruit fly).